The sequence spans 442 residues: Exodeoxyribonuclease 7 large subunit (442 aa).

The protein belongs to the XseA family. As to quaternary structure, heterooligomer composed of large and small subunits.

It localises to the cytoplasm. It catalyses the reaction Exonucleolytic cleavage in either 5'- to 3'- or 3'- to 5'-direction to yield nucleoside 5'-phosphates.. Its function is as follows. Bidirectionally degrades single-stranded DNA into large acid-insoluble oligonucleotides, which are then degraded further into small acid-soluble oligonucleotides. This is Exodeoxyribonuclease 7 large subunit from Shewanella sediminis (strain HAW-EB3).